Consider the following 119-residue polypeptide: Large ribosomal subunit protein bL20 (119 aa).

This sequence belongs to the bacterial ribosomal protein bL20 family.

Functionally, binds directly to 23S ribosomal RNA and is necessary for the in vitro assembly process of the 50S ribosomal subunit. It is not involved in the protein synthesizing functions of that subunit. The sequence is that of Large ribosomal subunit protein bL20 from Xylella fastidiosa (strain 9a5c).